The chain runs to 267 residues: Triosephosphate isomerase (267 aa).

12–14 (NWK) is a binding site for substrate. His-104 serves as the catalytic Electrophile. The active-site Proton acceptor is the Glu-176. Substrate-binding positions include Gly-182, Ser-222, and 243–244 (GG).

It belongs to the triosephosphate isomerase family. Homodimer.

The protein resides in the cytoplasm. The catalysed reaction is D-glyceraldehyde 3-phosphate = dihydroxyacetone phosphate. The protein operates within carbohydrate biosynthesis; gluconeogenesis. It functions in the pathway carbohydrate degradation; glycolysis; D-glyceraldehyde 3-phosphate from glycerone phosphate: step 1/1. Involved in the gluconeogenesis. Catalyzes stereospecifically the conversion of dihydroxyacetone phosphate (DHAP) to D-glyceraldehyde-3-phosphate (G3P). The sequence is that of Triosephosphate isomerase from Bifidobacterium longum (strain DJO10A).